The chain runs to 223 residues: Ras-related protein RABA4c (223 aa).

22–29 contributes to the GTP binding site; that stretch reads GDSAVGKS. The Effector region signature appears at 44 to 52; that stretch reads SKATIGVEF. GTP is bound by residues 70–74, 128–131, and 158–159; these read DTAGQ, NKTD, and SA. S-geranylgeranyl cysteine attachment occurs at residues Cys-219 and Cys-220.

This sequence belongs to the small GTPase superfamily. Rab family.

The protein localises to the cell membrane. Functionally, intracellular vesicle trafficking and protein transport. This chain is Ras-related protein RABA4c (RABA4C), found in Arabidopsis thaliana (Mouse-ear cress).